Here is a 282-residue protein sequence, read N- to C-terminus: Acetyl-coenzyme A carboxylase carboxyl transferase subunit beta (282 aa).

Positions 26-282 (GLWHQTPTGK…VSKTVKLLVH (257 aa)) constitute a CoA carboxyltransferase N-terminal domain.

It belongs to the AccD/PCCB family. In terms of assembly, acetyl-CoA carboxylase is a heterohexamer composed of biotin carboxyl carrier protein (AccB), biotin carboxylase (AccC) and two subunits each of ACCase subunit alpha (AccA) and ACCase subunit beta (AccD).

Its subcellular location is the cytoplasm. It carries out the reaction N(6)-carboxybiotinyl-L-lysyl-[protein] + acetyl-CoA = N(6)-biotinyl-L-lysyl-[protein] + malonyl-CoA. The protein operates within lipid metabolism; malonyl-CoA biosynthesis; malonyl-CoA from acetyl-CoA: step 1/1. Component of the acetyl coenzyme A carboxylase (ACC) complex. Biotin carboxylase (BC) catalyzes the carboxylation of biotin on its carrier protein (BCCP) and then the CO(2) group is transferred by the transcarboxylase to acetyl-CoA to form malonyl-CoA. The polypeptide is Acetyl-coenzyme A carboxylase carboxyl transferase subunit beta (Flavobacteriaceae bacterium (strain 3519-10)).